The following is a 449-amino-acid chain: Chromosomal replication initiator protein DnaA (449 aa).

The segment at 1-71 (MPSSLWKHCL…LLSHYSSGRI (71 aa)) is domain I, interacts with DnaA modulators. Residues 71–112 (IEKALLEVGSCSLQPQPHIQAVELTSKSARSSSRVVDRIPES) form a domain II region. Residues 113–329 (RLNKNYTFDS…GALRRVIAYS (217 aa)) form a domain III, AAA+ region region. Positions 157, 159, 160, and 161 each coordinate ATP. A domain IV, binds dsDNA region spans residues 330–449 (RFTHRPITME…YHNLLKKLST (120 aa)).

It belongs to the DnaA family. As to quaternary structure, oligomerizes as a right-handed, spiral filament on DNA at oriC.

It is found in the cytoplasm. In terms of biological role, plays an essential role in the initiation and regulation of chromosomal replication. ATP-DnaA binds to the origin of replication (oriC) to initiate formation of the DNA replication initiation complex once per cell cycle. Binds the DnaA box (a 9 base pair repeat at the origin) and separates the double-stranded (ds)DNA. Forms a right-handed helical filament on oriC DNA; dsDNA binds to the exterior of the filament while single-stranded (ss)DNA is stabiized in the filament's interior. The ATP-DnaA-oriC complex binds and stabilizes one strand of the AT-rich DNA unwinding element (DUE), permitting loading of DNA polymerase. After initiation quickly degrades to an ADP-DnaA complex that is not apt for DNA replication. Binds acidic phospholipids. This Nitrosococcus oceani (strain ATCC 19707 / BCRC 17464 / JCM 30415 / NCIMB 11848 / C-107) protein is Chromosomal replication initiator protein DnaA.